We begin with the raw amino-acid sequence, 937 residues long: C-1-tetrahydrofolate synthase, cytoplasmic (937 aa).

The segment at 1-309 (MALLLEGTSL…TLLPLKLQTP (309 aa)) is methylenetetrahydrofolate dehydrogenase and cyclohydrolase. Substrate contacts are provided by residues 50–54 (YVRMK) and 97–99 (VQL). Residues 168–170 (GRS) and serine 193 each bind NADP(+). 268-272 (PGSVG) is a substrate binding site. The segment at 310-937 (VPSDIEIARS…AENGDIVGLS (628 aa)) is formyltetrahydrofolate synthetase. 374–381 (TPFGEGKS) provides a ligand contact to ATP.

This sequence in the N-terminal section; belongs to the tetrahydrofolate dehydrogenase/cyclohydrolase family. The protein in the C-terminal section; belongs to the formate--tetrahydrofolate ligase family. Homodimer.

It is found in the cytoplasm. The catalysed reaction is (6R)-5,10-methylene-5,6,7,8-tetrahydrofolate + NADP(+) = (6R)-5,10-methenyltetrahydrofolate + NADPH. It catalyses the reaction (6R)-5,10-methenyltetrahydrofolate + H2O = (6R)-10-formyltetrahydrofolate + H(+). The enzyme catalyses (6S)-5,6,7,8-tetrahydrofolate + formate + ATP = (6R)-10-formyltetrahydrofolate + ADP + phosphate. It functions in the pathway one-carbon metabolism; tetrahydrofolate interconversion. The chain is C-1-tetrahydrofolate synthase, cytoplasmic from Schizosaccharomyces pombe (strain 972 / ATCC 24843) (Fission yeast).